Reading from the N-terminus, the 760-residue chain is General transcription and DNA repair factor IIH helicase subunit XPD (760 aa).

The 277-residue stretch at 7–283 (GLLVYFPYDY…KETDEQRLRD (277 aa)) folds into the Helicase ATP-binding domain. Residue 42–49 (MPSGTGKT) participates in ATP binding. Cys-116, Cys-134, Cys-155, and Cys-190 together coordinate [4Fe-4S] cluster. Residues 234 to 237 (DEAH) carry the DEAH box motif. A mediates interaction with MMS19 region spans residues 438–637 (MDASLAIKPV…TQSRILKARL (200 aa)).

This sequence belongs to the helicase family. RAD3/XPD subfamily. As to quaternary structure, component of the 7-subunit TFIIH core complex composed of XPB/ERCC3, XPD/ERCC2, GTF2H1, GTF2H2, GTF2H3, GTF2H4 and GTF2H5, which is active in NER. The core complex associates with the 3-subunit CDK-activating kinase (CAK) module composed of CCNH/cyclin H, CDK7 and MNAT1 to form the 10-subunit holoenzyme (holo-TFIIH) active in transcription. The interaction with GTF2H2 results in the stimulation of the 5'--&gt;3' helicase activity. Component of the MMXD complex, which includes CIAO1, ERCC2, CIAO2B, MMS19 and SLC25A5. Interacts with CIAO1 and CIAO2B; the interaction WITH CIAO2B is direct. Interacts with ATF7IP. Interacts directly with MMS19. Part of TBP-based Pol II pre-initiation complex (PIC), in which Pol II core assembles with general transcription factors and other specific initiation factors including GTF2E1, GTF2E2, GTF2F1, GTF2F2, TCEA1, ERCC2, ERCC3, GTF2H2, GTF2H3, GTF2H4, GTF2H5, GTF2A1, GTF2A2, GTF2B and TBP; this large multi-subunit PIC complex mediates DNA unwinding and targets Pol II core to the transcription start site where the first phosphodiester bond forms. Mg(2+) serves as cofactor. [4Fe-4S] cluster is required as a cofactor. In terms of processing, ISGylated.

Its subcellular location is the nucleus. It localises to the cytoplasm. The protein resides in the cytoskeleton. The protein localises to the spindle. It catalyses the reaction Couples ATP hydrolysis with the unwinding of duplex DNA at the replication fork by translocating in the 5'-3' direction. This creates two antiparallel DNA single strands (ssDNA). The leading ssDNA polymer is the template for DNA polymerase III holoenzyme which synthesizes a continuous strand.. The catalysed reaction is ATP + H2O = ADP + phosphate + H(+). ATP-dependent 5'-3' DNA helicase, component of the general transcription and DNA repair factor IIH (TFIIH) core complex, which is involved in general and transcription-coupled nucleotide excision repair (NER) of damaged DNA and, when complexed to CDK-activating kinase (CAK), involved in transcription by RNA polymerase II. In NER, TFIIH acts by opening DNA around the lesion to allow the excision of the damaged oligonucleotide and its replacement by a new DNA fragment. The ATP-dependent helicase activity of XPD/ERCC2 is required for DNA opening. In transcription, TFIIH has an essential role in transcription initiation. When the pre-initiation complex (PIC) has been established, TFIIH is required for promoter opening and promoter escape. Phosphorylation of the C-terminal tail (CTD) of the largest subunit of RNA polymerase II by the kinase module CAK controls the initiation of transcription. XPD/ERCC2 acts by forming a bridge between CAK and the core-TFIIH complex. Involved in the regulation of vitamin-D receptor activity. As part of the mitotic spindle-associated MMXD complex it plays a role in chromosome segregation. Might have a role in aging process and could play a causative role in the generation of skin cancers. This is General transcription and DNA repair factor IIH helicase subunit XPD (Ercc2) from Mus musculus (Mouse).